The chain runs to 346 residues: MSHKINDQTLVNEQRLLAYDFFQNSNKVGLLSTLQYLDFVNFLVRSKKVNYLLVNKVSLPIYQKIYFDNFPFLGFDNNLWSAFGLALRNKSQNDTVFAFVEKTKNTDTEINKFLKILKTFKGLKIVFLLINSPEEKTTIKLSDSLIKEIKKQKIKHEVYSLRSFQNKFFKLVRKLEKKHKSKNNVMFVELNGVFGYETNFEKSNIDFSFTSFQDRFTIEKKLKITSHFILPHKYLLKNLENIKHPNFEQKNLIWQQTVKDFNQQFLLHYSKLQVFSNSPTKLKVDALIFDLEFHLIVEIMKGFNFDENCICLLEGNKEQNPNLPTVSLDTKVADIKTYQGCYFLNN.

This is an uncharacterized protein from Mycoplasma genitalium (strain ATCC 33530 / DSM 19775 / NCTC 10195 / G37) (Mycoplasmoides genitalium).